Reading from the N-terminus, the 325-residue chain is Hydroxylase/desaturase poxK (325 aa).

The segment covering 1–12 (MTATATPVPTVA) has biased composition (low complexity). The disordered stretch occupies residues 1–25 (MTATATPVPTVASHAQDITLPPPPK).

This sequence belongs to the asaB hydroxylase/desaturase family.

Its pathway is secondary metabolite biosynthesis. Hydroxylase/desaturase; part of the gene cluster that mediates the biosynthesis of oxaleimides, cytotoxic compounds containing an unusual disubstituted succinimide moiety. The first step of the pathway is provided by the HR-PKS poxF that serves in a new mode of collaborative biosynthesis with the PKS-NRPS poxE, by providing the olefin containing amino acid substrate via the synthesis of an ACP-bound dec-4-enoate. The cytochrome P450 monooxygenase poxM-catalyzed oxidation at the alpha-position creates the enzyme-bound 2-hydroxydec-4-enoyl-ACP thioester, which may be prone to spontaneous hydrolysis to yield 2-hydroxydec-4-enoic acid due to increased electrophilicity of the carbonyl. 2-hydroxydec-4-enoic acid can then be further oxidized by poxM to yield the alpha-ketoacid 2-oxodec-4-enoicacid, which is reductively aminated by the aminotransferase poxL to yield (S,E)-2-aminodec-4-enoic acid. The Hybrid PKS-NRPS synthetase poxE then performs condensation between the octaketide product of its PKS modules and the amino group of (S,E)-2-aminodec-4-enoic acid which is activated and incorporated by the adenylation domain. The resulting aminoacyl product can be cyclized by the Diels-Alderase PoxQ and reductively released by the reductive (R) domain of poxE to yield an aldehyde intermediate. The released aldehyde is then substrate for a Knoevenagel condensation by the hydrolyase poxO followed by an oxidation at the 5-position of the pyrrolidone ring. The presence of the olefin from the amino acid building block allows for migration of the substituted allyl group to occur. This allylic transposition reaction takes place in a conjugate addition, semipinacol-like fashion to yield a succinimide intermediate. Iterative two-electron oxidations of the C7 methyl of the succinimide intermediate to the carboxylic acid can be catalyzed by one of two remaining cytochrome P450 monooxygenasess poxC or poxD to yield oxaleimide A. Subsequent oxidation yields the maleimide scaffold oxaleimide I. Both oxaleimide A and oxaleimide I can undergo oxidative modifications in the decalin ring to yield the series of products oxaleimides B to H. The polypeptide is Hydroxylase/desaturase poxK (Penicillium oxalicum (strain 114-2 / CGMCC 5302) (Penicillium decumbens)).